Reading from the N-terminus, the 304-residue chain is 33 kDa chaperonin (304 aa).

2 disulfide bridges follow: C245-C247 and C278-C281.

The protein belongs to the HSP33 family. Under oxidizing conditions two disulfide bonds are formed involving the reactive cysteines. Under reducing conditions zinc is bound to the reactive cysteines and the protein is inactive.

It is found in the cytoplasm. In terms of biological role, redox regulated molecular chaperone. Protects both thermally unfolding and oxidatively damaged proteins from irreversible aggregation. Plays an important role in the bacterial defense system toward oxidative stress. The chain is 33 kDa chaperonin from Microcystis aeruginosa (strain NIES-843 / IAM M-2473).